Consider the following 640-residue polypeptide: Chitin elicitor receptor kinase 1 (640 aa).

The signal sequence occupies residues 1-31; that stretch reads MKFQMKMKSELCRTYKYWLILLVLWLSGVTQ. The Extracellular segment spans residues 32–248; that stretch reads RETGVLIVDA…GTVHWRSNVG (217 aa). 3 disulfide bridges follow: cysteine 43–cysteine 104, cysteine 49–cysteine 166, and cysteine 102–cysteine 164. LysM domains are found at residues 53-98, 113-160, and 179-227; these read AYYR…NIYL, FSYT…SLTI, and STYV…KAAN. Residues 119-125 and 148-154 each bind chitin; these read TNDTAEK and DLSSIYS. A helical membrane pass occupies residues 249-269; the sequence is IIVGVVVGGIVLAVLLLFALI. Residues 270 to 640 are Cytoplasmic-facing; the sequence is FGFKHFRRRK…SQPPSGNDQL (371 aa). The segment at 286–308 is disordered; the sequence is MQQSGLLSSSSMAGSKPSRSGST. Residues 289 to 307 are compositionally biased toward low complexity; the sequence is SGLLSSSSMAGSKPSRSGS. The Protein kinase domain maps to 330 to 612; it reads FSLAKKIGQG…RFAVVQLMTL (283 aa). ATP is bound by residues 336–344 and lysine 357; that span reads IGQGGFASV. Residue aspartate 452 is the Proton acceptor of the active site.

The protein belongs to the protein kinase superfamily. Ser/Thr protein kinase family.

Its subcellular location is the cell membrane. It catalyses the reaction L-seryl-[protein] + ATP = O-phospho-L-seryl-[protein] + ADP + H(+). The catalysed reaction is L-threonyl-[protein] + ATP = O-phospho-L-threonyl-[protein] + ADP + H(+). In terms of biological role, lysin motif (LysM) receptor kinase required as a cell surface receptor for chitin elicitor (chitooligosaccharides) signaling leading to innate immunity in response to biotic stresses. The CERK1, MEKK1a/b, MKK1a/b/c and MPK4a/b proteins are involved in pathogen defense. The pathway induces rapid growth inhibition, cell wall depositions and accumulation of defense-related transcripts. This protein is required for response to chitin. Is able to complement the A.thaliana cerk1 mutant. This is Chitin elicitor receptor kinase 1 from Physcomitrium patens (Spreading-leaved earth moss).